We begin with the raw amino-acid sequence, 302 residues long: Intermediate capsid protein VP8 (302 aa).

The protein resides in the virion. In terms of biological role, self assembles to form an icosahedral capsid with a T=13 symmetry, which consists of 230 trimers, with channels at each of its five-fold vertices. The sequence is that of Intermediate capsid protein VP8 (Segment-8) from Banna virus (BAV).